The sequence spans 589 residues: Capsid scaffolding protein (589 aa).

Catalysis depends on charge relay system residues H47, S118, and H142. The segment covering 264–273 (EKERPKEPEQ) has biased composition (basic and acidic residues). Residues 264–283 (EKERPKEPEQSHVPTESMSH) are disordered. The interval 307–326 (HDGVYLPKDAFFSLIGASRP) is interaction with pAP. Disordered stretches follow at residues 421–478 (RSRS…GDRY) and 514–552 (ASPT…AERG). Short sequence motifs (nuclear localization signal) lie at residues 428–433 (KRRRER) and 453–459 (KARKRLK). The segment covering 453–462 (KARKRLKAHH) has biased composition (basic residues). The span at 514–543 (ASPTTTTSHQAEASEPQASTAAAAPSTASS) shows a compositional bias: low complexity. The interval 569-589 (PPKDMVDLNRRLFVAALNKME) is interaction with major capsid protein.

The protein belongs to the herpesviridae capsid scaffolding protein family. In terms of assembly, homomultimer. Interacts with major capsid protein. Exists in a monomer-dimer equilibrium with the dimer being the active species. Post-translationally, capsid scaffolding protein is cleaved by assemblin after formation of the spherical procapsid. As a result, the capsid obtains its mature, icosahedral shape. Cleavages occur at two or more sites: release (R-site) and maturation (M-site).

The protein localises to the host cytoplasm. The protein resides in the host nucleus. It catalyses the reaction Cleaves -Ala-|-Ser- and -Ala-|-Ala- bonds in the scaffold protein.. Functionally, acts as a scaffold protein by binding major capsid protein in the cytoplasm, inducing the nuclear localization of both proteins. Multimerizes in the nucleus such as major capsid protein forms the icosahedral T=16 capsid. Autocatalytic cleavage releases the assembly protein, and subsequently abolishes interaction with major capsid protein. Cleavages products are evicted from the capsid before or during DNA packaging. Protease that plays an essential role in virion assembly within the nucleus. Catalyzes the cleavage of the assembly protein after formation of the spherical procapsid. By that cleavage, the capsid matures and gains its icosahedral shape. The cleavage sites seem to include -Ala-Ser-, -Ala-Ala-, as well as Ala-Thr bonds. Assemblin and cleavages products are evicted from the capsid before or during DNA packaging. Its function is as follows. Plays a major role in capsid assembly. Acts as a scaffold protein by binding major capsid protein. Multimerizes in the nucleus such as major capsid protein forms the icosahedral T=16 capsid. Cleaved by assemblin after capsid completion. The cleavages products are evicted from the capsid before or during DNA packaging. This is Capsid scaffolding protein (UL80) from Simian cytomegalovirus (strain Colburn).